The following is a 223-amino-acid chain: UPF0441 protein YgiB (223 aa).

The tract at residues 201 to 223 (ESVAKQSTMQRSAAGTSTRSMGG) is disordered. Residues 204 to 223 (AKQSTMQRSAAGTSTRSMGG) are compositionally biased toward polar residues.

Belongs to the UPF0441 family.

This chain is UPF0441 protein YgiB, found in Salmonella gallinarum (strain 287/91 / NCTC 13346).